A 256-amino-acid chain; its full sequence is Trans-aconitate 2-methyltransferase (256 aa).

This sequence belongs to the methyltransferase superfamily. Tam family.

It localises to the cytoplasm. It carries out the reaction trans-aconitate + S-adenosyl-L-methionine = (E)-3-(methoxycarbonyl)pent-2-enedioate + S-adenosyl-L-homocysteine. Functionally, catalyzes the S-adenosylmethionine monomethyl esterification of trans-aconitate. The polypeptide is Trans-aconitate 2-methyltransferase (Rhodopseudomonas palustris (strain HaA2)).